Consider the following 387-residue polypeptide: Anhydro-N-acetylmuramic acid kinase (387 aa).

Residue 17–24 (GTSMDGVD) coordinates ATP.

The protein belongs to the anhydro-N-acetylmuramic acid kinase family.

It carries out the reaction 1,6-anhydro-N-acetyl-beta-muramate + ATP + H2O = N-acetyl-D-muramate 6-phosphate + ADP + H(+). Its pathway is amino-sugar metabolism; 1,6-anhydro-N-acetylmuramate degradation. It participates in cell wall biogenesis; peptidoglycan recycling. Catalyzes the specific phosphorylation of 1,6-anhydro-N-acetylmuramic acid (anhMurNAc) with the simultaneous cleavage of the 1,6-anhydro ring, generating MurNAc-6-P. Is required for the utilization of anhMurNAc either imported from the medium or derived from its own cell wall murein, and thus plays a role in cell wall recycling. In Burkholderia mallei (strain ATCC 23344), this protein is Anhydro-N-acetylmuramic acid kinase.